The sequence spans 386 residues: 2,3,4,5-tetrahydropyridine-2,6-dicarboxylate N-succinyltransferase (386 aa).

Glutamate 257 (acyl-anhydride intermediate) is an active-site residue. Succinyl-CoA contacts are provided by residues arginine 259, glycine 274, serine 277, alanine 300, 315–316 (DA), glycine 323, lysine 349, and 362–365 (RQDS).

It belongs to the type 2 tetrahydrodipicolinate N-succinyltransferase family. Homotrimer.

It localises to the cytoplasm. It catalyses the reaction (S)-2,3,4,5-tetrahydrodipicolinate + succinyl-CoA + H2O = (S)-2-succinylamino-6-oxoheptanedioate + CoA. The protein operates within amino-acid biosynthesis; L-lysine biosynthesis via DAP pathway; LL-2,6-diaminopimelate from (S)-tetrahydrodipicolinate (succinylase route): step 1/3. Functionally, catalyzes the conversion of the cyclic tetrahydrodipicolinate (THDP) into the acyclic N-succinyl-L-2-amino-6-oxopimelate using succinyl-CoA. The protein is 2,3,4,5-tetrahydropyridine-2,6-dicarboxylate N-succinyltransferase of Campylobacter jejuni subsp. jejuni serotype O:2 (strain ATCC 700819 / NCTC 11168).